We begin with the raw amino-acid sequence, 461 residues long: Divalent metal cation transporter MntH (461 aa).

Helical transmembrane passes span 56–76, 89–109, 132–152, 160–180, 193–213, 230–250, 285–305, 322–342, 378–398, 399–419, and 433–453; these read AMAF…PGNW, TLLA…SLCA, AMVL…AEVI, LIFG…VFLI, ALVI…LALA, IVTN…TVMP, IALM…AATF, LLAP…ALLC, AIAI…GTGQ, LLIL…FPLV, and SPLW…ALNV.

Belongs to the NRAMP family.

It is found in the cell inner membrane. In terms of biological role, h(+)-stimulated, divalent metal cation uptake system. This Agrobacterium fabrum (strain C58 / ATCC 33970) (Agrobacterium tumefaciens (strain C58)) protein is Divalent metal cation transporter MntH.